The primary structure comprises 131 residues: Small ribosomal subunit protein bS6 (131 aa).

Positions 98–131 are disordered; it reads EASPMVKAKDERRERRDDFANETADDADAGDSEE. A compositionally biased stretch (basic and acidic residues) spans 104–116; the sequence is KAKDERRERRDDF. Over residues 120–131 the composition is skewed to acidic residues; it reads TADDADAGDSEE.

This sequence belongs to the bacterial ribosomal protein bS6 family.

In terms of biological role, binds together with bS18 to 16S ribosomal RNA. This is Small ribosomal subunit protein bS6 from Citrobacter koseri (strain ATCC BAA-895 / CDC 4225-83 / SGSC4696).